A 389-amino-acid polypeptide reads, in one-letter code: STE20-related kinase adapter protein alpha (389 aa).

Residues 11 to 321 (YELLTIIGRG…AGALLNHPFF (311 aa)) enclose the Protein kinase domain.

The protein belongs to the protein kinase superfamily. STE Ser/Thr protein kinase family. STE20 subfamily. Component of a trimeric complex composed of STK11/LKB1, STRAD (STRADA or STRADB) and CAB39/MO25 (CAB39/MO25alpha or CAB39L/MO25beta): the complex tethers STK11/LKB1 in the cytoplasm and stimulates its catalytic activity. As to expression, expressed in brain, hypothalamus, heart and skeletal muscle.

Its subcellular location is the nucleus. The protein localises to the cytoplasm. In terms of biological role, pseudokinase which, in complex with CAB39/MO25 (CAB39/MO25alpha or CAB39L/MO25beta), binds to and activates STK11/LKB1. Adopts a closed conformation typical of active protein kinases and binds STK11/LKB1 as a pseudosubstrate, promoting conformational change of STK11/LKB1 in an active conformation. The chain is STE20-related kinase adapter protein alpha (STRADA) from Gallus gallus (Chicken).